The primary structure comprises 106 residues: Large ribosomal subunit protein uL24 (106 aa).

The protein belongs to the universal ribosomal protein uL24 family. In terms of assembly, part of the 50S ribosomal subunit.

One of two assembly initiator proteins, it binds directly to the 5'-end of the 23S rRNA, where it nucleates assembly of the 50S subunit. In terms of biological role, one of the proteins that surrounds the polypeptide exit tunnel on the outside of the subunit. The polypeptide is Large ribosomal subunit protein uL24 (Blochmanniella floridana).